The following is a 262-amino-acid chain: Small ribosomal subunit protein uS2 (262 aa).

Positions 223 to 262 are disordered; the sequence is KSLLEQDGGEQAAGEEVSQDEKDAVVAEAMSEEDFGEDEE. Residues 227–238 are compositionally biased toward low complexity; that stretch reads EQDGGEQAAGEE. The span at 252–262 shows a compositional bias: acidic residues; the sequence is MSEEDFGEDEE.

Belongs to the universal ribosomal protein uS2 family.

This is Small ribosomal subunit protein uS2 from Campylobacter concisus (strain 13826).